A 262-amino-acid chain; its full sequence is Phosphatidylglycerol--prolipoprotein diacylglyceryl transferase (262 aa).

A run of 4 helical transmembrane segments spans residues 9–29 (LGPLAIRWYALCIVTGLILAV), 41–61 (IIPDDILDFILVAFPLAILGA), 80–100 (IFAIWNGGLAIYGGLITGALV), and 109–129 (LINTWDFLDIAAPSVMIAQSL). Residue R131 participates in a 1,2-diacyl-sn-glycero-3-phospho-(1'-sn-glycerol) binding. 3 helical membrane passes run 167 to 187 (QPTFLYESLWNLLGFALILIF), 197 to 217 (GHITAFYLIWYGFGRMVIEGM), and 226 to 246 (GLRVSQWLSVVFIGLGIMIVI).

It belongs to the Lgt family.

It is found in the cell membrane. The enzyme catalyses L-cysteinyl-[prolipoprotein] + a 1,2-diacyl-sn-glycero-3-phospho-(1'-sn-glycerol) = an S-1,2-diacyl-sn-glyceryl-L-cysteinyl-[prolipoprotein] + sn-glycerol 1-phosphate + H(+). Its pathway is protein modification; lipoprotein biosynthesis (diacylglyceryl transfer). In terms of biological role, catalyzes the transfer of the diacylglyceryl group from phosphatidylglycerol to the sulfhydryl group of the N-terminal cysteine of a prolipoprotein, the first step in the formation of mature lipoproteins. This Streptococcus pneumoniae (strain ATCC 700669 / Spain 23F-1) protein is Phosphatidylglycerol--prolipoprotein diacylglyceryl transferase.